The chain runs to 190 residues: Shikimate kinase (190 aa).

An ATP-binding site is contributed by 26–31 (GSGKST). Residue Ser30 participates in Mg(2+) binding. Substrate contacts are provided by Asp48, Arg72, and Gly94. Arg133 contributes to the ATP binding site. A substrate-binding site is contributed by Arg152.

It belongs to the shikimate kinase family. Monomer. Mg(2+) is required as a cofactor.

Its subcellular location is the cytoplasm. The catalysed reaction is shikimate + ATP = 3-phosphoshikimate + ADP + H(+). It participates in metabolic intermediate biosynthesis; chorismate biosynthesis; chorismate from D-erythrose 4-phosphate and phosphoenolpyruvate: step 5/7. In terms of biological role, catalyzes the specific phosphorylation of the 3-hydroxyl group of shikimic acid using ATP as a cosubstrate. The sequence is that of Shikimate kinase from Prochlorococcus marinus (strain SARG / CCMP1375 / SS120).